A 526-amino-acid polypeptide reads, in one-letter code: CTP synthase (526 aa).

Residues 1–264 (MPQRFIVVTG…HKLIAKELDI (264 aa)) are amidoligase domain. Serine 14 lines the CTP pocket. Serine 14 contributes to the UTP binding site. Residues 15–20 (GIGKGI) and aspartate 72 each bind ATP. Mg(2+)-binding residues include aspartate 72 and glutamate 138. Residues 145-147 (DIE), 185-190 (KTKPTQ), and lysine 221 contribute to the CTP site. Residues 185 to 190 (KTKPTQ) and lysine 221 contribute to the UTP site. Residues 282–526 (KIGIVGKYLG…VKAAGGKIND (245 aa)) form the Glutamine amidotransferase type-1 domain. An L-glutamine-binding site is contributed by glycine 342. Cysteine 369 serves as the catalytic Nucleophile; for glutamine hydrolysis. L-glutamine-binding positions include 370–373 (LGMQ), glutamate 393, and arginine 451. Catalysis depends on residues histidine 499 and glutamate 501.

Belongs to the CTP synthase family. As to quaternary structure, homotetramer.

It carries out the reaction UTP + L-glutamine + ATP + H2O = CTP + L-glutamate + ADP + phosphate + 2 H(+). It catalyses the reaction L-glutamine + H2O = L-glutamate + NH4(+). The enzyme catalyses UTP + NH4(+) + ATP = CTP + ADP + phosphate + 2 H(+). The protein operates within pyrimidine metabolism; CTP biosynthesis via de novo pathway; CTP from UDP: step 2/2. Its activity is regulated as follows. Allosterically activated by GTP, when glutamine is the substrate; GTP has no effect on the reaction when ammonia is the substrate. The allosteric effector GTP functions by stabilizing the protein conformation that binds the tetrahedral intermediate(s) formed during glutamine hydrolysis. Inhibited by the product CTP, via allosteric rather than competitive inhibition. In terms of biological role, catalyzes the ATP-dependent amination of UTP to CTP with either L-glutamine or ammonia as the source of nitrogen. Regulates intracellular CTP levels through interactions with the four ribonucleotide triphosphates. This is CTP synthase from Thermosipho africanus (strain TCF52B).